The chain runs to 564 residues: MAINSSDKWTVIAICLILGILLAFILMFWLERFRVIIKSNAHKHDPSDKRQIWLEKYYLFVRQIYTYLVTHKVILTLIAVPVVFAISIPFIGMQTPASSHGKQTTQVSTGNWSKNAVAARLGFLACGLYVTSYFFSIKNNPFALLLISSHEKMNYVHRRLSQYAIMIGAIHGFAYIGLAAQGKRALLTARVTIIGYVILGLMVIMIVSSLPFFRRRFYEWFFVLHHMCSIGFLITIWLHHRRCVVYMKVCVAVYVFDRGCRMLRSFLNRSKFDVVLVEDDLIYMKGPRPKKSFFGLPWGAGNHMYINIPSLSYWQIHPFTIASVPSDDFIELFVAVRAGFTKRLAKKVSSKSLSDVSDINISDEKIEKNGDVGIEVMERHSLSQEDLVFESSAAKVSVLMDGPYGPVSNPYKDYSYLFLFAGGVGVSYILPIILDTIKKQSRTVHITFVWSARSSALLNIVHKSLCEAVRYTEMNINIFCHLTNSYPVEEVSSLNSQSARNYSLQYLNGRPDVNDYFKDFLHATGTQTAALASCGSDKLLRHLKSCVNTHSPSTVDLYQHYEEI.

The N-linked (GlcNAc...) asparagine glycan is linked to asparagine 4. 2 helical membrane passes run 10–30 (TVIA…MFWL) and 73–93 (VILT…FIGM). The N-linked (GlcNAc...) asparagine glycan is linked to asparagine 111. The chain crosses the membrane as a helical span at residues 117-137 (VAARLGFLACGLYVTSYFFSI). In terms of domain architecture, Ferric oxidoreductase spans 121-254 (LGFLACGLYV…VYMKVCVAVY (134 aa)). Heme is bound by residues histidine 157 and histidine 171. The next 2 membrane-spanning stretches (helical) occupy residues 160–180 (LSQY…GLAA) and 193–213 (IIGY…LPFF). Heme contacts are provided by histidine 225 and histidine 239. The FAD-binding FR-type domain maps to 255-410 (VFDRGCRMLR…DGPYGPVSNP (156 aa)). N-linked (GlcNAc...) asparagine glycosylation is present at asparagine 268. 317–323 (HPFTIAS) lines the FAD pocket. Asparagine 360 carries N-linked (GlcNAc...) asparagine glycosylation. Residues serine 362, serine 381, and serine 383 each carry the phosphoserine modification. A helical membrane pass occupies residues 417–437 (LFLFAGGVGVSYILPIILDTI). Residue 419-427 (LFAGGVGVS) coordinates NAD(+). An N-linked (GlcNAc...) asparagine glycan is attached at asparagine 501.

Belongs to the ferric reductase (FRE) family. The cofactor is FAD. It depends on heme as a cofactor.

It localises to the cell membrane. It catalyses the reaction 2 a Fe(II)-siderophore + NADP(+) + H(+) = 2 a Fe(III)-siderophore + NADPH. Its function is as follows. Metalloreductase responsible for reducing extracellular iron and copper prior to import. Catalyzes the reductive uptake of Fe(3+)-salts and Fe(3+) bound to catecholate or hydroxamate siderophores. Fe(3+) is reduced to Fe(2+), which then dissociates from the siderophore and can be imported by the high-affinity Fe(2+) transport complex in the plasma membrane. Also participates in Cu(2+) reduction and Cu(+) uptake. This Schizosaccharomyces pombe (strain 972 / ATCC 24843) (Fission yeast) protein is Ferric reductase transmembrane component 1 (frp1).